The sequence spans 175 residues: Sec-independent protein translocase protein TatB (175 aa).

Residues 1 to 21 (MFDIGWSELVLIGVVALIAIG) traverse the membrane as a helical segment. 2 disordered regions span residues 100–132 (KPAE…PTPE) and 155–175 (QAPV…AKAS). Positions 111 to 132 (EAPATSSEALTTPTTPEAPTPE) are enriched in low complexity.

This sequence belongs to the TatB family. The Tat system comprises two distinct complexes: a TatABC complex, containing multiple copies of TatA, TatB and TatC subunits, and a separate TatA complex, containing only TatA subunits. Substrates initially bind to the TatABC complex, which probably triggers association of the separate TatA complex to form the active translocon.

The protein resides in the cell inner membrane. Functionally, part of the twin-arginine translocation (Tat) system that transports large folded proteins containing a characteristic twin-arginine motif in their signal peptide across membranes. Together with TatC, TatB is part of a receptor directly interacting with Tat signal peptides. TatB may form an oligomeric binding site that transiently accommodates folded Tat precursor proteins before their translocation. This Bradyrhizobium diazoefficiens (strain JCM 10833 / BCRC 13528 / IAM 13628 / NBRC 14792 / USDA 110) protein is Sec-independent protein translocase protein TatB.